We begin with the raw amino-acid sequence, 26 residues long: Unknown protein 16 (26 aa).

The interval 1 to 26 is disordered; sequence AINSESGVRSVVPQPCNALPNQGPEK.

The chain is Unknown protein 16 from Pseudotsuga menziesii (Douglas-fir).